The chain runs to 156 residues: Ribosomal RNA large subunit methyltransferase H (156 aa).

Residues L73, G104, and 123–128 contribute to the S-adenosyl-L-methionine site; that span reads LSSLTL.

This sequence belongs to the RNA methyltransferase RlmH family. Homodimer.

Its subcellular location is the cytoplasm. It carries out the reaction pseudouridine(1915) in 23S rRNA + S-adenosyl-L-methionine = N(3)-methylpseudouridine(1915) in 23S rRNA + S-adenosyl-L-homocysteine + H(+). Functionally, specifically methylates the pseudouridine at position 1915 (m3Psi1915) in 23S rRNA. In Neisseria meningitidis serogroup C (strain 053442), this protein is Ribosomal RNA large subunit methyltransferase H.